The chain runs to 288 residues: Proteasome assembly chaperone 1 (288 aa).

N-acetylalanine is present on alanine 2. The disordered stretch occupies residues 13-35 (PCRAGTEDEEEEEEGRRETPEDR). Threonine 18 carries the post-translational modification Phosphothreonine. The segment covering 26–35 (EGRRETPEDR) has biased composition (basic and acidic residues). Position 54 is a phosphothreonine (threonine 54). Serine 180 carries the post-translational modification Phosphoserine. Lysine 264 carries the post-translational modification N6-acetyllysine.

It belongs to the PSMG1 family. Forms a heterodimer with PSMG2. The PSMG1-PSMG2 heterodimer interacts directly with the PSMA5 and PSMA7 proteasome alpha subunits. In terms of processing, degraded by the proteasome upon completion of 20S proteasome maturation. As to expression, in the adult, detected in brain, colon, leukocytes, breast and testis. Widely expressed in the fetus. Also expressed in a variety of proliferating cell lines.

The protein resides in the cytoplasm. It is found in the endoplasmic reticulum. Its function is as follows. Chaperone protein which promotes assembly of the 20S proteasome as part of a heterodimer with PSMG2. The PSMG1-PSMG2 heterodimer binds to the PSMA5 and PSMA7 proteasome subunits, promotes assembly of the proteasome alpha subunits into the heteroheptameric alpha ring and prevents alpha ring dimerization. This Homo sapiens (Human) protein is Proteasome assembly chaperone 1.